A 100-amino-acid chain; its full sequence is MVPLWWFIVLGVVLFVIGAAGVLLRRNILVVLMSLELLLNSVNINFIAFGHYYDDFRGQIFAIFVIAITAAEVAVALGILVALVRNKSTLKVDDVTMLKG.

The next 3 helical transmembrane spans lie at 4-24, 28-48, and 60-80; these read LWWF…GVLL, ILVV…NFIA, and IFAI…LGIL.

The protein belongs to the complex I subunit 4L family. As to quaternary structure, NDH-1 is composed of 14 different subunits. Subunits NuoA, H, J, K, L, M, N constitute the membrane sector of the complex.

The protein resides in the cell inner membrane. It catalyses the reaction a quinone + NADH + 5 H(+)(in) = a quinol + NAD(+) + 4 H(+)(out). Functionally, NDH-1 shuttles electrons from NADH, via FMN and iron-sulfur (Fe-S) centers, to quinones in the respiratory chain. The immediate electron acceptor for the enzyme in this species is believed to be ubiquinone. Couples the redox reaction to proton translocation (for every two electrons transferred, four hydrogen ions are translocated across the cytoplasmic membrane), and thus conserves the redox energy in a proton gradient. The polypeptide is NADH-quinone oxidoreductase subunit K 2 (Rhizobium etli (strain CIAT 652)).